The sequence spans 151 residues: UPF0208 membrane protein YfbV (151 aa).

The Cytoplasmic portion of the chain corresponds to 1–45; that stretch reads MSTPDNRSVNFFSLFRRGQHYAKTWPMEKRLAPVFVENRVIRMTR. The helical transmembrane segment at 46–65 threads the bilayer; the sequence is YAIRFMPPVAVFTLCWQIAL. At 66–68 the chain is on the periplasmic side; it reads GGQ. Residues 69–91 form a helical membrane-spanning segment; it reads LGPAVATALFALSLPMQGLWWLG. The Cytoplasmic portion of the chain corresponds to 92–151; the sequence is KRSLTPLPPSILNWFYEVRGKLQEAGQALAPVEGKPDYQALADTLKRAFKQLDKTFLDDL.

This sequence belongs to the UPF0208 family.

It localises to the cell inner membrane. This Salmonella typhi protein is UPF0208 membrane protein YfbV (yfbV).